Consider the following 388-residue polypeptide: GTPase Obg (388 aa).

Residues 4–162 (SNFVDYVKIY…MTVILELKLL (159 aa)) form the Obg domain. The interval 18-45 (KGGRGSTHMRREKYTPNGGPDGGDGGRG) is disordered. Positions 36–45 (GPDGGDGGRG) are enriched in gly residues. In terms of domain architecture, OBG-type G spans 163 to 329 (ADVGLVGFPN…LKDILWTELN (167 aa)). Residues 169–176 (GFPNAGKS), 194–198 (FTTLE), 216–219 (DIPG), 283–286 (TKSD), and 310–312 (SSV) contribute to the GTP site. Positions 176 and 196 each coordinate Mg(2+). Residues 352–388 (LKDMGEDEELDYEYEDDGDGDEDDLDYEYEEEDWEDK) form a disordered region. Over residues 356–388 (GEDEELDYEYEDDGDGDEDDLDYEYEEEDWEDK) the composition is skewed to acidic residues.

This sequence belongs to the TRAFAC class OBG-HflX-like GTPase superfamily. OBG GTPase family. As to quaternary structure, monomer. Mg(2+) is required as a cofactor.

The protein resides in the cytoplasm. Its function is as follows. An essential GTPase which binds GTP, GDP and possibly (p)ppGpp with moderate affinity, with high nucleotide exchange rates and a fairly low GTP hydrolysis rate. Plays a role in control of the cell cycle, stress response, ribosome biogenesis and in those bacteria that undergo differentiation, in morphogenesis control. This chain is GTPase Obg, found in Bacteroides fragilis (strain ATCC 25285 / DSM 2151 / CCUG 4856 / JCM 11019 / LMG 10263 / NCTC 9343 / Onslow / VPI 2553 / EN-2).